The following is a 504-amino-acid chain: Ribonuclease Y (504 aa).

Residues 194 to 279 enclose the KH domain; the sequence is TVHVVSLPND…EMVEKAKQEV (86 aa). One can recognise an HD domain in the interval 320 to 413; sequence VLKHSMEVAY…VQAADAISAA (94 aa).

The protein belongs to the RNase Y family.

Functionally, endoribonuclease that initiates mRNA decay. This chain is Ribonuclease Y, found in Clostridium novyi (strain NT).